The following is a 418-amino-acid chain: Glutamyl-tRNA(Gln) amidotransferase subunit D (418 aa).

The 327-residue stretch at 81–407 (PDVKIISTGG…EEAKEMVKKS (327 aa)) folds into the Asparaginase/glutaminase domain. Catalysis depends on residues Thr-91, Thr-166, Asp-167, and Lys-243.

It belongs to the asparaginase 1 family. GatD subfamily. In terms of assembly, heterodimer of GatD and GatE.

The catalysed reaction is L-glutamyl-tRNA(Gln) + L-glutamine + ATP + H2O = L-glutaminyl-tRNA(Gln) + L-glutamate + ADP + phosphate + H(+). Functionally, allows the formation of correctly charged Gln-tRNA(Gln) through the transamidation of misacylated Glu-tRNA(Gln) in organisms which lack glutaminyl-tRNA synthetase. The reaction takes place in the presence of glutamine and ATP through an activated gamma-phospho-Glu-tRNA(Gln). The GatDE system is specific for glutamate and does not act on aspartate. This is Glutamyl-tRNA(Gln) amidotransferase subunit D from Archaeoglobus fulgidus (strain ATCC 49558 / DSM 4304 / JCM 9628 / NBRC 100126 / VC-16).